Reading from the N-terminus, the 591-residue chain is 4-coumarate--CoA ligase-like 3 (591 aa).

Serine 228, serine 229, glycine 230, threonine 231, serine 232, and lysine 236 together coordinate ATP. Tyrosine 280 contributes to the (E)-4-coumaroyl-AMP binding site. Arginine 301 serves as a coordination point for CoA. Residues 303 to 375 (DAGDAVAAIG…QAFPHVDFIQ (73 aa)) are SBD1. Positions 353, 375, 376, and 380 each coordinate (E)-4-coumaroyl-AMP. Glutamine 375, glycine 376, threonine 380, aspartate 459, and arginine 474 together coordinate ATP. The SBD2 stretch occupies residues 376 to 440 (GYGMTESTAV…LHGPGIMKGY (65 aa)). Residues lysine 476 and lysine 480 each contribute to the (E)-4-coumaroyl-AMP site. The CoA site is built by lysine 482 and glycine 483. Position 565 (lysine 565) interacts with ATP.

The protein belongs to the ATP-dependent AMP-binding enzyme family. Mg(2+) serves as cofactor.

It catalyses the reaction (E)-4-coumarate + ATP + CoA = (E)-4-coumaroyl-CoA + AMP + diphosphate. The catalysed reaction is (E)-4-coumarate + ATP + H(+) = (E)-4-coumaroyl-AMP + diphosphate. The enzyme catalyses (E)-4-coumaroyl-AMP + CoA = (E)-4-coumaroyl-CoA + AMP + H(+). In terms of biological role, carboxylate--CoA ligase that may use 4-coumarate as substrate. Follows a two-step reaction mechanism, wherein the carboxylate substrate first undergoes adenylation by ATP, followed by a thioesterification in the presence of CoA to yield the final CoA thioester. In Oryza sativa subsp. japonica (Rice), this protein is 4-coumarate--CoA ligase-like 3 (4CLL3).